Here is a 292-residue protein sequence, read N- to C-terminus: G1/S-specific cyclin-D3 (292 aa).

The Cyclin N-terminal domain maps to 27–152 (VLQSLLRLEE…LVLGKLKWDL (126 aa)). The segment at 256–292 (REAAQTAPSPVPKAPRGSSSQGPSQTSTPTDVTAIHL) is disordered. 2 positions are modified to phosphoserine: Ser-264 and Ser-279. A compositionally biased stretch (low complexity) spans 272–285 (GSSSQGPSQTSTPT). Residue Thr-283 is modified to Phosphothreonine.

It belongs to the cyclin family. Cyclin D subfamily. As to quaternary structure, interacts with the CDK4 and CDK6 protein kinases to form a serine/threonine kinase holoenzyme complex. The cyclin subunit imparts substrate specificity to the complex. Interacts with ATF5. Interacts with EIF3K. Component of the ternary complex cyclin D/CDK4/CDKN1B required for nuclear translocation and modulation of CDK4-mediated kinase activity. Can form similar complexes with either CDKN1A or CDKN2A. Phosphorylation at Thr-283 by MAP kinases is required for ubiquitination and degradation by the DCX(AMBRA1) complex. In terms of processing, ubiquitinated by the DCX(AMBRA1) complex during the transition from G1 to S cell phase, leading to its degradation: ubiquitination is dependent on Thr-283 phosphorylation. The DCX(AMBRA1) complex represents the major regulator of CCND3 stability during the G1/S transition. Polyubiquitinated by the SCF(FBXL2) complex, leading to proteasomal degradation.

The protein localises to the nucleus. It is found in the cytoplasm. Its function is as follows. Regulatory component of the cyclin D3-CDK4 (DC) complex that phosphorylates and inhibits members of the retinoblastoma (RB) protein family including RB1 and regulates the cell-cycle during G(1)/S transition. Phosphorylation of RB1 allows dissociation of the transcription factor E2F from the RB/E2F complex and the subsequent transcription of E2F target genes which are responsible for the progression through the G(1) phase. Hypophosphorylates RB1 in early G(1) phase. Cyclin D-CDK4 complexes are major integrators of various mitogenenic and antimitogenic signals. Component of the ternary complex, cyclin D3/CDK4/CDKN1B, required for nuclear translocation and activity of the cyclin D-CDK4 complex. Shows transcriptional coactivator activity with ATF5 independently of CDK4. The protein is G1/S-specific cyclin-D3 of Mus musculus (Mouse).